The chain runs to 178 residues: Endothelin-2 (178 aa).

Positions 1 to 24 are cleaved as a signal peptide; that stretch reads MPAPGVHHPNTASPFLKTVAAGKG. The propeptide occupies 25–46; it reads QVAAAPEHPAPSARARGSHLRP. Cystine bridges form between C49/C63 and C51/C59. Positions 70 to 178 are excised as a propeptide; sequence VNTPGQTAPY…RPTHPRRRKR (109 aa). The interval 96–111 is endothelin-like; that stretch reads CECSSGGDPACATFCH. Positions 156–178 are disordered; sequence RFPRRPQEAGRQLRPTHPRRRKR. The segment covering 169 to 178 has biased composition (basic residues); it reads RPTHPRRRKR.

The protein belongs to the endothelin/sarafotoxin family.

The protein localises to the secreted. Endothelins are endothelium-derived vasoconstrictor peptides. The sequence is that of Endothelin-2 (EDN2) from Canis lupus familiaris (Dog).